The sequence spans 274 residues: Serine/threonine-protein kinase 1 (274 aa).

The Protein kinase domain maps to 16 to 273; sequence AVLAPKVVNG…HSFLASRHDY (258 aa). ATP is bound by residues 22-30 and Lys-46; that span reads VVNGRFGKM. Asp-134 acts as the Proton acceptor in catalysis.

It belongs to the protein kinase superfamily. Ser/Thr protein kinase family.

The enzyme catalyses L-seryl-[protein] + ATP = O-phospho-L-seryl-[protein] + ADP + H(+). The catalysed reaction is L-threonyl-[protein] + ATP = O-phospho-L-threonyl-[protein] + ADP + H(+). The protein is Serine/threonine-protein kinase 1 (PK1) of Orgyia pseudotsugata multicapsid polyhedrosis virus (OpMNPV).